A 178-amino-acid polypeptide reads, in one-letter code: MARAAPGSGASPLPLLPALALGLVILHCVVADGNSTRSPEDDGLLCGDHAENCPATTTQPKRRGHFSRCPKQYKHYCIKGRCRFVVAEQTPSCVCDEGYAGARCERVDLFYLRGDRGQILVICLIAVMVIFIILVVSICTCCHPLRKRRKRRKKEEEMETLGKDITPINDDIQETSIA.

The N-terminal stretch at 1 to 31 is a signal peptide; sequence MARAAPGSGASPLPLLPALALGLVILHCVVA. The Extracellular segment spans residues 32 to 118; that stretch reads DGNSTRSPED…LFYLRGDRGQ (87 aa). Residue Asn-34 is glycosylated (N-linked (GlcNAc...) asparagine). One can recognise an EGF-like domain in the interval 65–105; the sequence is HFSRCPKQYKHYCIKGRCRFVVAEQTPSCVCDEGYAGARCE. Intrachain disulfides connect Cys-69–Cys-82, Cys-77–Cys-93, and Cys-95–Cys-104. Positions 112–178 are cleaved as a propeptide — removed in mature form; it reads LRGDRGQILV…NDDIQETSIA (67 aa). A helical transmembrane segment spans residues 119 to 139; that stretch reads ILVICLIAVMVIFIILVVSIC. The Cytoplasmic segment spans residues 140-178; the sequence is TCCHPLRKRRKRRKKEEEMETLGKDITPINDDIQETSIA.

As to quaternary structure, monomer. Interacts with EGFR and ERBB4. As to expression, expressed in a wide range of tissues, including the mammary gland.

It localises to the secreted. It is found in the extracellular space. The protein resides in the cell membrane. Growth factor that binds to EGFR, ERBB4 and other EGF receptor family members. Potent mitogen for retinal pigment epithelial cells and vascular smooth muscle cells. This is Probetacellulin (BTC) from Bos taurus (Bovine).